Consider the following 259-residue polypeptide: tRNA pseudouridine synthase A (259 aa).

Asp52 (nucleophile) is an active-site residue. Substrate is bound at residue Tyr111.

Belongs to the tRNA pseudouridine synthase TruA family. Homodimer.

The catalysed reaction is uridine(38/39/40) in tRNA = pseudouridine(38/39/40) in tRNA. Its function is as follows. Formation of pseudouridine at positions 38, 39 and 40 in the anticodon stem and loop of transfer RNAs. The protein is tRNA pseudouridine synthase A of Ruegeria sp. (strain TM1040) (Silicibacter sp.).